An 828-amino-acid chain; its full sequence is DNA gyrase subunit A (828 aa).

One can recognise a Topo IIA-type catalytic domain in the interval 32 to 497 (LPDVRDGLKP…EVLSLEDEDL (466 aa)). Tyrosine 120 (O-(5'-phospho-DNA)-tyrosine intermediate) is an active-site residue. The GyrA-box motif lies at 524 to 530 (QKRGGRG).

It belongs to the type II topoisomerase GyrA/ParC subunit family. In terms of assembly, heterotetramer, composed of two GyrA and two GyrB chains. In the heterotetramer, GyrA contains the active site tyrosine that forms a transient covalent intermediate with DNA, while GyrB binds cofactors and catalyzes ATP hydrolysis.

The protein localises to the cytoplasm. The enzyme catalyses ATP-dependent breakage, passage and rejoining of double-stranded DNA.. Functionally, a type II topoisomerase that negatively supercoils closed circular double-stranded (ds) DNA in an ATP-dependent manner to modulate DNA topology and maintain chromosomes in an underwound state. Negative supercoiling favors strand separation, and DNA replication, transcription, recombination and repair, all of which involve strand separation. Also able to catalyze the interconversion of other topological isomers of dsDNA rings, including catenanes and knotted rings. Type II topoisomerases break and join 2 DNA strands simultaneously in an ATP-dependent manner. This is DNA gyrase subunit A from Streptococcus pyogenes serotype M18 (strain MGAS8232).